Reading from the N-terminus, the 314-residue chain is Ornithine carbamoyltransferase (314 aa).

Carbamoyl phosphate is bound by residues Ser58–Thr61, Gln85, Arg109, and His136–Gln139. Residues Asn168, Asp232, and Ser236–Met237 contribute to the L-ornithine site. Residues Cys272–Leu273 and Arg300 each bind carbamoyl phosphate.

This sequence belongs to the aspartate/ornithine carbamoyltransferase superfamily. OTCase family.

It localises to the cytoplasm. The catalysed reaction is carbamoyl phosphate + L-ornithine = L-citrulline + phosphate + H(+). It functions in the pathway amino-acid biosynthesis; L-arginine biosynthesis; L-arginine from L-ornithine and carbamoyl phosphate: step 1/3. Its function is as follows. Reversibly catalyzes the transfer of the carbamoyl group from carbamoyl phosphate (CP) to the N(epsilon) atom of ornithine (ORN) to produce L-citrulline. This is Ornithine carbamoyltransferase from Hyperthermus butylicus (strain DSM 5456 / JCM 9403 / PLM1-5).